A 345-amino-acid chain; its full sequence is S-adenosylmethionine:tRNA ribosyltransferase-isomerase (345 aa).

Belongs to the QueA family. Monomer.

It localises to the cytoplasm. The catalysed reaction is 7-aminomethyl-7-carbaguanosine(34) in tRNA + S-adenosyl-L-methionine = epoxyqueuosine(34) in tRNA + adenine + L-methionine + 2 H(+). It participates in tRNA modification; tRNA-queuosine biosynthesis. In terms of biological role, transfers and isomerizes the ribose moiety from AdoMet to the 7-aminomethyl group of 7-deazaguanine (preQ1-tRNA) to give epoxyqueuosine (oQ-tRNA). The sequence is that of S-adenosylmethionine:tRNA ribosyltransferase-isomerase from Shewanella putrefaciens (strain CN-32 / ATCC BAA-453).